The following is a 306-amino-acid chain: uncharacterized protein (306 aa).

A run of 10 helical transmembrane segments spans residues 6–26 (LLGF…PIAL), 35–55 (AQTI…ALLA), 69–89 (YAWI…LFSS), 98–118 (VAQI…VLIF), 122–142 (LGLH…LFFN), 154–174 (YSTG…YGMA), 186–206 (QILL…ADFS), 211–231 (LTPL…IGYG), 247–267 (VVIT…HYFS), and 281–301 (YIGA…HKLL). EamA domains lie at 17–142 (MAWG…LFFN) and 166–296 (LIWV…LSAI).

The protein belongs to the EamA transporter family.

Its subcellular location is the cell membrane. This is an uncharacterized protein from Haemophilus influenzae (strain ATCC 51907 / DSM 11121 / KW20 / Rd).